Reading from the N-terminus, the 202-residue chain is LexA repressor (202 aa).

The segment at residues 28–48 (RAEIAQQLGFRSPNAAEEHLK) is a DNA-binding region (H-T-H motif). Catalysis depends on for autocatalytic cleavage activity residues Ser119 and Lys156.

It belongs to the peptidase S24 family. In terms of assembly, homodimer.

The enzyme catalyses Hydrolysis of Ala-|-Gly bond in repressor LexA.. Functionally, represses a number of genes involved in the response to DNA damage (SOS response), including recA and lexA. Binds to the 16 bp palindromic sequence 5'-CTGTATATATATACAG-3'. In the presence of single-stranded DNA, RecA interacts with LexA causing an autocatalytic cleavage which disrupts the DNA-binding part of LexA, leading to derepression of the SOS regulon and eventually DNA repair. This is LexA repressor from Pectobacterium carotovorum subsp. carotovorum (strain PC1).